Here is a 190-residue protein sequence, read N- to C-terminus: Xanthine phosphoribosyltransferase (190 aa).

Xanthine contacts are provided by Leu-20 and Asn-27. Position 128–132 (128–132 (ANGHA)) interacts with 5-phospho-alpha-D-ribose 1-diphosphate. Residue Lys-156 coordinates xanthine.

This sequence belongs to the purine/pyrimidine phosphoribosyltransferase family. Xpt subfamily. Homodimer.

The protein resides in the cytoplasm. The catalysed reaction is XMP + diphosphate = xanthine + 5-phospho-alpha-D-ribose 1-diphosphate. The protein operates within purine metabolism; XMP biosynthesis via salvage pathway; XMP from xanthine: step 1/1. In terms of biological role, converts the preformed base xanthine, a product of nucleic acid breakdown, to xanthosine 5'-monophosphate (XMP), so it can be reused for RNA or DNA synthesis. The sequence is that of Xanthine phosphoribosyltransferase from Ectopseudomonas mendocina (strain ymp) (Pseudomonas mendocina).